The sequence spans 70 residues: Flexible pilin (70 aa).

The N-terminal stretch at 1-24 (MPNFFRNGCIALVGSVAAMGAAHA) is a signal peptide.

In terms of assembly, homomer.

It localises to the fimbrium. Fimbriae (also called pili) are polar filaments radiating from the surface of the bacterium to a length of 0.5-1.5 micrometers and numbering 100-300 per cell. They enable bacteria to colonize the epithelium of specific host organs. Flexible pili possess hemagglutinating function. The chain is Flexible pilin (aerA) from Aeromonas hydrophila.